The chain runs to 263 residues: Rhomboid-like protease 3 (263 aa).

A run of 6 helical transmembrane segments spans residues 37–57 (KSIV…CVLS), 86–106 (VVTP…LVFI), 121–141 (KFLV…MLMQ), 142–162 (PWAL…GMAA), 189–209 (LIYF…GGFL), and 231–251 (VLFY…PPLL). Ser150 (nucleophile) is an active-site residue. Residue His204 is part of the active site.

Belongs to the peptidase S54 family.

It localises to the membrane. The catalysed reaction is Cleaves type-1 transmembrane domains using a catalytic dyad composed of serine and histidine that are contributed by different transmembrane domains.. In terms of biological role, serine protease involved in intramembrane proteolysis and the subsequent release of polypeptides from their membrane anchors. This is Rhomboid-like protease 3 (ROM3) from Toxoplasma gondii.